A 92-amino-acid chain; its full sequence is Small ribosomal subunit protein uS19 (92 aa).

Belongs to the universal ribosomal protein uS19 family.

Functionally, protein S19 forms a complex with S13 that binds strongly to the 16S ribosomal RNA. The sequence is that of Small ribosomal subunit protein uS19 from Bacillus licheniformis (strain ATCC 14580 / DSM 13 / JCM 2505 / CCUG 7422 / NBRC 12200 / NCIMB 9375 / NCTC 10341 / NRRL NRS-1264 / Gibson 46).